A 323-amino-acid chain; its full sequence is Phosphatidylglycerol--prolipoprotein diacylglyceryl transferase (323 aa).

The next 3 helical transmembrane spans lie at 15–35, 58–78, and 106–126; these read VIQG…ILIS, FMFS…TLVY, and GMAI…TINT. R156 is a binding site for a 1,2-diacyl-sn-glycero-3-phospho-(1'-sn-glycerol). 2 helical membrane-spanning segments follow: residues 242 to 262 and 289 to 309; these read GFIF…IEYL and ISMG…WIIV.

It belongs to the Lgt family.

It is found in the cell inner membrane. It carries out the reaction L-cysteinyl-[prolipoprotein] + a 1,2-diacyl-sn-glycero-3-phospho-(1'-sn-glycerol) = an S-1,2-diacyl-sn-glyceryl-L-cysteinyl-[prolipoprotein] + sn-glycerol 1-phosphate + H(+). The protein operates within protein modification; lipoprotein biosynthesis (diacylglyceryl transfer). Functionally, catalyzes the transfer of the diacylglyceryl group from phosphatidylglycerol to the sulfhydryl group of the N-terminal cysteine of a prolipoprotein, the first step in the formation of mature lipoproteins. This chain is Phosphatidylglycerol--prolipoprotein diacylglyceryl transferase, found in Borreliella afzelii (strain PKo) (Borrelia afzelii).